The chain runs to 555 residues: CTP synthase (555 aa).

Residues 1 to 267 (MAKYIFVTGG…GNYLTLRLGL (267 aa)) form an amidoligase domain region. Position 13 (Ser-13) interacts with CTP. Residue Ser-13 participates in UTP binding. Position 14–19 (14–19 (SVGKGI)) interacts with ATP. Tyr-54 provides a ligand contact to L-glutamine. ATP is bound at residue Asp-71. Mg(2+)-binding residues include Asp-71 and Glu-141. CTP contacts are provided by residues 148–150 (DIE), 188–193 (KTKPTQ), and Lys-224. UTP-binding positions include 188–193 (KTKPTQ) and Lys-224. Residues 292–535 (AIALVGKYVE…IAAAAQTFRE (244 aa)) form the Glutamine amidotransferase type-1 domain. Gly-354 provides a ligand contact to L-glutamine. Catalysis depends on Cys-381, which acts as the Nucleophile; for glutamine hydrolysis. L-glutamine-binding positions include 382–385 (LGMQ), Glu-406, and Arg-463. Catalysis depends on residues His-508 and Glu-510.

The protein belongs to the CTP synthase family. In terms of assembly, homotetramer.

It carries out the reaction UTP + L-glutamine + ATP + H2O = CTP + L-glutamate + ADP + phosphate + 2 H(+). The catalysed reaction is L-glutamine + H2O = L-glutamate + NH4(+). The enzyme catalyses UTP + NH4(+) + ATP = CTP + ADP + phosphate + 2 H(+). The protein operates within pyrimidine metabolism; CTP biosynthesis via de novo pathway; CTP from UDP: step 2/2. With respect to regulation, allosterically activated by GTP, when glutamine is the substrate; GTP has no effect on the reaction when ammonia is the substrate. The allosteric effector GTP functions by stabilizing the protein conformation that binds the tetrahedral intermediate(s) formed during glutamine hydrolysis. Inhibited by the product CTP, via allosteric rather than competitive inhibition. Its function is as follows. Catalyzes the ATP-dependent amination of UTP to CTP with either L-glutamine or ammonia as the source of nitrogen. Regulates intracellular CTP levels through interactions with the four ribonucleotide triphosphates. This Roseiflexus castenholzii (strain DSM 13941 / HLO8) protein is CTP synthase.